We begin with the raw amino-acid sequence, 300 residues long: Geranylgeranyl pyrophosphate synthase (300 aa).

Met1 is subject to N-acetylmethionine. The isopentenyl diphosphate site is built by Lys25, Arg28, and His57. Positions 64 and 68 each coordinate Mg(2+). Arg73 provides a ligand contact to dimethylallyl diphosphate. Arg74 lines the isopentenyl diphosphate pocket. Residues Lys151, Thr152, Gln185, Lys202, and Lys212 each contribute to the dimethylallyl diphosphate site.

Belongs to the FPP/GGPP synthase family. In terms of assembly, homohexamer; trimer of homodimers. Mg(2+) is required as a cofactor.

The protein resides in the cytoplasm. It localises to the perinuclear region. The protein localises to the myofibril. Its subcellular location is the sarcomere. It is found in the z line. The catalysed reaction is isopentenyl diphosphate + dimethylallyl diphosphate = (2E)-geranyl diphosphate + diphosphate. It carries out the reaction isopentenyl diphosphate + (2E)-geranyl diphosphate = (2E,6E)-farnesyl diphosphate + diphosphate. It catalyses the reaction isopentenyl diphosphate + (2E,6E)-farnesyl diphosphate = (2E,6E,10E)-geranylgeranyl diphosphate + diphosphate. Its pathway is isoprenoid biosynthesis; farnesyl diphosphate biosynthesis; farnesyl diphosphate from geranyl diphosphate and isopentenyl diphosphate: step 1/1. The protein operates within isoprenoid biosynthesis; geranyl diphosphate biosynthesis; geranyl diphosphate from dimethylallyl diphosphate and isopentenyl diphosphate: step 1/1. It participates in isoprenoid biosynthesis; geranylgeranyl diphosphate biosynthesis; geranylgeranyl diphosphate from farnesyl diphosphate and isopentenyl diphosphate: step 1/1. Functionally, catalyzes the trans-addition of the three molecules of IPP onto DMAPP to form geranylgeranyl pyrophosphate, an important precursor of carotenoids and geranylated proteins. In Rattus norvegicus (Rat), this protein is Geranylgeranyl pyrophosphate synthase (Ggps1).